Consider the following 613-residue polypeptide: Na(+)/H(+) antiporter NhaA 1 (613 aa).

The disordered stretch occupies residues 1 to 24 (MTEASARTIGPLPSRFSRDPKTPR). The tract at residues 1–408 (MTEASARTIG…DPARQDEARV (408 aa)) is na(+)/H(+) antiporter NhaA. 11 consecutive transmembrane segments (helical) span residues 29–49 (AAAA…NSPW), 81–101 (GLMA…FVIG), 110–130 (AVPV…FLTF), 138–158 (QAWG…LAVI), 168–188 (IFLL…IALF), 191–211 (DDLK…LAMV), 231–251 (IALY…AVLI), 300–320 (AVGP…NAGV), 337–357 (WGIV…ATAL), 377–397 (GGAA…DVAI), and 408–428 (VGVL…FRIT). The Thioredoxin domain occupies 409 to 613 (GVLIASVLAF…SLIRALEAGR (205 aa)).

This sequence in the N-terminal section; belongs to the NhaA Na(+)/H(+) (TC 2.A.33) antiporter family.

It is found in the cell membrane. The catalysed reaction is Na(+)(in) + 2 H(+)(out) = Na(+)(out) + 2 H(+)(in). Its function is as follows. Na(+)/H(+) antiporter that extrudes sodium in exchange for external protons. This Mycobacterium sp. (strain JLS) protein is Na(+)/H(+) antiporter NhaA 1.